A 256-amino-acid chain; its full sequence is Polycomb group RING finger protein 5 (256 aa).

The RING-type zinc-finger motif lies at 18–57 (CYICKGYLIKPTTVTECLHTFCKTCIVQHFEDSNDCPRCG). Basic and acidic residues-rich tracts occupy residues 94–103 (ESEFWKKNKP) and 110–120 (DTSKADKPKVD). Positions 94-133 (ESEFWKKNKPQENGQDDTSKADKPKVDEEGDENEDDKDYH) are disordered.

As to quaternary structure, component of a PRC1-like complex that contains PCGF5, RNF2 and UBE2D3. Interacts with RNF2; the interaction is direct. Interacts with CBX6, CBX7 and CBX8. Interacts with AUTS2; the interaction is direct. Identified in a complex that contains AUTS2, PCGF5, CSNK2B and RNF2.

Its subcellular location is the nucleus. It localises to the nucleoplasm. In terms of biological role, component of a Polycomb group (PcG) multiprotein PRC1-like complex, a complex class required to maintain the transcriptionally repressive state of many genes, including Hox genes, throughout development. PcG PRC1 complex acts via chromatin remodeling and modification of histones; it mediates monoubiquitination of histone H2A 'Lys-119', rendering chromatin heritably changed in its expressibility. Within the PRC1-like complex, regulates RNF2 ubiquitin ligase activity. Plays a redundant role with PCGF3 as part of a PRC1-like complex that mediates monoubiquitination of histone H2A 'Lys-119' on the X chromosome and is required for normal silencing of one copy of the X chromosome in XX females. The chain is Polycomb group RING finger protein 5 (PCGF5) from Homo sapiens (Human).